A 287-amino-acid polypeptide reads, in one-letter code: Putative sugar uptake protein M6_Spy1874 (287 aa).

10 consecutive transmembrane segments (helical) span residues isoleucine 4–glycine 26, leucine 33–valine 50, threonine 55–glycine 72, valine 85–valine 107, phenylalanine 117–serine 134, phenylalanine 154–phenylalanine 171, serine 181–phenylalanine 200, tyrosine 207–alanine 229, leucine 234–leucine 256, and valine 268–valine 285.

This sequence belongs to the GRP transporter (TC 2.A.7.5) family.

It localises to the cell membrane. The protein is Putative sugar uptake protein M6_Spy1874 of Streptococcus pyogenes serotype M6 (strain ATCC BAA-946 / MGAS10394).